A 490-amino-acid polypeptide reads, in one-letter code: Aspartyl/glutamyl-tRNA(Asn/Gln) amidotransferase subunit B (490 aa).

The protein belongs to the GatB/GatE family. GatB subfamily. As to quaternary structure, heterotrimer of A, B and C subunits.

It carries out the reaction L-glutamyl-tRNA(Gln) + L-glutamine + ATP + H2O = L-glutaminyl-tRNA(Gln) + L-glutamate + ADP + phosphate + H(+). The enzyme catalyses L-aspartyl-tRNA(Asn) + L-glutamine + ATP + H2O = L-asparaginyl-tRNA(Asn) + L-glutamate + ADP + phosphate + 2 H(+). Functionally, allows the formation of correctly charged Asn-tRNA(Asn) or Gln-tRNA(Gln) through the transamidation of misacylated Asp-tRNA(Asn) or Glu-tRNA(Gln) in organisms which lack either or both of asparaginyl-tRNA or glutaminyl-tRNA synthetases. The reaction takes place in the presence of glutamine and ATP through an activated phospho-Asp-tRNA(Asn) or phospho-Glu-tRNA(Gln). This is Aspartyl/glutamyl-tRNA(Asn/Gln) amidotransferase subunit B from Burkholderia vietnamiensis (strain G4 / LMG 22486) (Burkholderia cepacia (strain R1808)).